The chain runs to 119 residues: MVFGTGVDNVELSRIQKALTRSERFVEQVLTTMELEKYNNFQSTARKTEFLAGRWAAKEAFSKAYGTGFGKALGMHDLEIKNDELGKPYFSKHPFEGQVHLSISHSNLEAVAFVVLEKN.

2 residues coordinate Mg(2+): aspartate 8 and glutamate 59.

Belongs to the P-Pant transferase superfamily. AcpS family. It depends on Mg(2+) as a cofactor.

It is found in the cytoplasm. It catalyses the reaction apo-[ACP] + CoA = holo-[ACP] + adenosine 3',5'-bisphosphate + H(+). In terms of biological role, transfers the 4'-phosphopantetheine moiety from coenzyme A to a Ser of acyl-carrier-protein. This Lactococcus lactis subsp. cremoris (strain SK11) protein is Holo-[acyl-carrier-protein] synthase.